The chain runs to 314 residues: tRNA dimethylallyltransferase (314 aa).

Residue 12–19 participates in ATP binding; it reads GPTAGGKS. 14–19 serves as a coordination point for substrate; sequence TAGGKS. The interval 37–40 is interaction with substrate tRNA; that stretch reads DSMQ.

It belongs to the IPP transferase family. In terms of assembly, monomer. Mg(2+) is required as a cofactor.

The catalysed reaction is adenosine(37) in tRNA + dimethylallyl diphosphate = N(6)-dimethylallyladenosine(37) in tRNA + diphosphate. Catalyzes the transfer of a dimethylallyl group onto the adenine at position 37 in tRNAs that read codons beginning with uridine, leading to the formation of N6-(dimethylallyl)adenosine (i(6)A). This Rhodospirillum centenum (strain ATCC 51521 / SW) protein is tRNA dimethylallyltransferase.